The following is a 189-amino-acid chain: MAVYSTNEFKNGLKVMVDDAPCSILDCEFVKPGKGQAFTRIKIRNLKTGRVVERTFKSGDTLPSADVADVEMQYLYNDGEHWHFMVPDTFEQYAVTENILADAAQWLKEQDVCVVTLWNNEPIQVTPPNFVILAITETDPGLKGDTSGGGGKPATLETGAVVRVPLFVQTGELIKVDTRKGEYVSRAKE.

The residue at position 34 (K34) is an N6-(3,6-diaminohexanoyl)-5-hydroxylysine.

It belongs to the elongation factor P family. Post-translationally, may be beta-lysylated on the epsilon-amino group of Lys-34 by the combined action of EpmA and EpmB, and then hydroxylated on the C5 position of the same residue by EpmC (if this protein is present). Lysylation is critical for the stimulatory effect of EF-P on peptide-bond formation. The lysylation moiety may extend toward the peptidyltransferase center and stabilize the terminal 3-CCA end of the tRNA. Hydroxylation of the C5 position on Lys-34 may allow additional potential stabilizing hydrogen-bond interactions with the P-tRNA.

Its subcellular location is the cytoplasm. It participates in protein biosynthesis; polypeptide chain elongation. In terms of biological role, involved in peptide bond synthesis. Alleviates ribosome stalling that occurs when 3 or more consecutive Pro residues or the sequence PPG is present in a protein, possibly by augmenting the peptidyl transferase activity of the ribosome. Modification of Lys-34 is required for alleviation. In Legionella pneumophila (strain Lens), this protein is Elongation factor P.